Consider the following 345-residue polypeptide: Holliday junction branch migration complex subunit RuvB (345 aa).

The interval 1–182 (MDQRIIASSS…FGIVQRLEFY (182 aa)) is large ATPase domain (RuvB-L). Residues Ile-21, Arg-22, Gly-63, Lys-66, Thr-67, Thr-68, 129–131 (EDF), Arg-172, Tyr-182, and Arg-219 contribute to the ATP site. Residue Thr-67 coordinates Mg(2+). The small ATPAse domain (RuvB-S) stretch occupies residues 183–253 (SPQELTRIVI…VAQAAMQMLK (71 aa)). Positions 256–345 (PEGFDELDRR…PGIGEPGDLF (90 aa)) are head domain (RuvB-H). Arg-292, Arg-311, and Arg-316 together coordinate DNA.

This sequence belongs to the RuvB family. As to quaternary structure, homohexamer. Forms an RuvA(8)-RuvB(12)-Holliday junction (HJ) complex. HJ DNA is sandwiched between 2 RuvA tetramers; dsDNA enters through RuvA and exits via RuvB. An RuvB hexamer assembles on each DNA strand where it exits the tetramer. Each RuvB hexamer is contacted by two RuvA subunits (via domain III) on 2 adjacent RuvB subunits; this complex drives branch migration. In the full resolvosome a probable DNA-RuvA(4)-RuvB(12)-RuvC(2) complex forms which resolves the HJ.

The protein localises to the cytoplasm. The catalysed reaction is ATP + H2O = ADP + phosphate + H(+). The RuvA-RuvB-RuvC complex processes Holliday junction (HJ) DNA during genetic recombination and DNA repair, while the RuvA-RuvB complex plays an important role in the rescue of blocked DNA replication forks via replication fork reversal (RFR). RuvA specifically binds to HJ cruciform DNA, conferring on it an open structure. The RuvB hexamer acts as an ATP-dependent pump, pulling dsDNA into and through the RuvAB complex. RuvB forms 2 homohexamers on either side of HJ DNA bound by 1 or 2 RuvA tetramers; 4 subunits per hexamer contact DNA at a time. Coordinated motions by a converter formed by DNA-disengaged RuvB subunits stimulates ATP hydrolysis and nucleotide exchange. Immobilization of the converter enables RuvB to convert the ATP-contained energy into a lever motion, pulling 2 nucleotides of DNA out of the RuvA tetramer per ATP hydrolyzed, thus driving DNA branch migration. The RuvB motors rotate together with the DNA substrate, which together with the progressing nucleotide cycle form the mechanistic basis for DNA recombination by continuous HJ branch migration. Branch migration allows RuvC to scan DNA until it finds its consensus sequence, where it cleaves and resolves cruciform DNA. The polypeptide is Holliday junction branch migration complex subunit RuvB (Xanthomonas oryzae pv. oryzae (strain MAFF 311018)).